A 273-amino-acid polypeptide reads, in one-letter code: WIMGHMVNAIYQIDEFVNLGANSIETDVSFDDNANPEYTYHGIPCDCGRSCLKWENYNDFLKGLRSATTPGNSKYQSKLILVVFDLKTGSLYDNQASEAGKKLAKNLLKHYWNNGNNGGRAYIVLSIPDLNHYPLIKGFTDTLKQEGHPELLEKVGYDFSGNDAIGDVVKAYKKAGVSGHVWQSDGITNCLLRGLSRVKDAVANRDSGKGYINKVYYWTVDKRATTRDALDAGVDGVMTNYPDVIADVMNEAAYKNKVRLATYEDSPWVTFKK.

Residue His-5 is part of the active site. Mg(2+)-binding residues include Glu-25 and Asp-27. His-41 acts as the Nucleophile in catalysis. Cystine bridges form between Cys-45-Cys-51 and Cys-47-Cys-190. Mg(2+) is bound at residue Asp-85.

Belongs to the arthropod phospholipase D family. Class II subfamily. Mg(2+) is required as a cofactor. Expressed by the venom gland.

It localises to the secreted. It carries out the reaction an N-(acyl)-sphingosylphosphocholine = an N-(acyl)-sphingosyl-1,3-cyclic phosphate + choline. The enzyme catalyses an N-(acyl)-sphingosylphosphoethanolamine = an N-(acyl)-sphingosyl-1,3-cyclic phosphate + ethanolamine. It catalyses the reaction a 1-acyl-sn-glycero-3-phosphocholine = a 1-acyl-sn-glycero-2,3-cyclic phosphate + choline. The catalysed reaction is a 1-acyl-sn-glycero-3-phosphoethanolamine = a 1-acyl-sn-glycero-2,3-cyclic phosphate + ethanolamine. Its function is as follows. Dermonecrotic toxins cleave the phosphodiester linkage between the phosphate and headgroup of certain phospholipids (sphingolipid and lysolipid substrates), forming an alcohol (often choline) and a cyclic phosphate. This toxin acts on sphingomyelin (SM). It may also act on ceramide phosphoethanolamine (CPE), lysophosphatidylcholine (LPC) and lysophosphatidylethanolamine (LPE), but not on lysophosphatidylserine (LPS), and lysophosphatidylglycerol (LPG). It acts by transphosphatidylation, releasing exclusively cyclic phosphate products as second products. Induces dermonecrosis, hemolysis, increased vascular permeability, edema, inflammatory response, and platelet aggregation. The polypeptide is Dermonecrotic toxin LhSicTox-alphaIA2bii (Loxosceles hirsuta (Recluse spider)).